A 339-amino-acid polypeptide reads, in one-letter code: Phenylalanine--tRNA ligase alpha subunit (339 aa).

Glu-262 lines the Mg(2+) pocket.

Belongs to the class-II aminoacyl-tRNA synthetase family. Phe-tRNA synthetase alpha subunit type 1 subfamily. As to quaternary structure, tetramer of two alpha and two beta subunits. Mg(2+) is required as a cofactor.

It is found in the cytoplasm. The catalysed reaction is tRNA(Phe) + L-phenylalanine + ATP = L-phenylalanyl-tRNA(Phe) + AMP + diphosphate + H(+). In Neisseria gonorrhoeae (strain ATCC 700825 / FA 1090), this protein is Phenylalanine--tRNA ligase alpha subunit.